The chain runs to 159 residues: NADH-quinone oxidoreductase subunit B (159 aa).

Positions 32, 33, 97, and 126 each coordinate [4Fe-4S] cluster.

The protein belongs to the complex I 20 kDa subunit family. In terms of assembly, NDH-1 is composed of 14 different subunits. Subunits NuoB, C, D, E, F, and G constitute the peripheral sector of the complex. [4Fe-4S] cluster is required as a cofactor.

It localises to the cell inner membrane. It carries out the reaction a quinone + NADH + 5 H(+)(in) = a quinol + NAD(+) + 4 H(+)(out). Its function is as follows. NDH-1 shuttles electrons from NADH, via FMN and iron-sulfur (Fe-S) centers, to quinones in the respiratory chain. The immediate electron acceptor for the enzyme in this species is believed to be ubiquinone. Couples the redox reaction to proton translocation (for every two electrons transferred, four hydrogen ions are translocated across the cytoplasmic membrane), and thus conserves the redox energy in a proton gradient. This Helicobacter pylori (strain J99 / ATCC 700824) (Campylobacter pylori J99) protein is NADH-quinone oxidoreductase subunit B.